The chain runs to 124 residues: Probable dihydroneopterin aldolase (124 aa).

Residues Glu-23, Tyr-56, and 75 to 76 (IE) each bind substrate. Lys-103 (proton donor/acceptor) is an active-site residue.

It belongs to the DHNA family.

It catalyses the reaction 7,8-dihydroneopterin = 6-hydroxymethyl-7,8-dihydropterin + glycolaldehyde. The protein operates within cofactor biosynthesis; tetrahydrofolate biosynthesis; 2-amino-4-hydroxy-6-hydroxymethyl-7,8-dihydropteridine diphosphate from 7,8-dihydroneopterin triphosphate: step 3/4. In terms of biological role, catalyzes the conversion of 7,8-dihydroneopterin to 6-hydroxymethyl-7,8-dihydropterin. The polypeptide is Probable dihydroneopterin aldolase (folB) (Chlamydia trachomatis serovar D (strain ATCC VR-885 / DSM 19411 / UW-3/Cx)).